The following is a 379-amino-acid chain: Succinyl-diaminopimelate desuccinylase (379 aa).

H70 lines the Zn(2+) pocket. D72 is an active-site residue. D103 is a binding site for Zn(2+). Catalysis depends on E137, which acts as the Proton acceptor. Zn(2+) is bound by residues E138, E166, and H352.

The protein belongs to the peptidase M20A family. DapE subfamily. In terms of assembly, homodimer. Zn(2+) serves as cofactor. Requires Co(2+) as cofactor.

The enzyme catalyses N-succinyl-(2S,6S)-2,6-diaminopimelate + H2O = (2S,6S)-2,6-diaminopimelate + succinate. Its pathway is amino-acid biosynthesis; L-lysine biosynthesis via DAP pathway; LL-2,6-diaminopimelate from (S)-tetrahydrodipicolinate (succinylase route): step 3/3. In terms of biological role, catalyzes the hydrolysis of N-succinyl-L,L-diaminopimelic acid (SDAP), forming succinate and LL-2,6-diaminopimelate (DAP), an intermediate involved in the bacterial biosynthesis of lysine and meso-diaminopimelic acid, an essential component of bacterial cell walls. This Burkholderia vietnamiensis (strain G4 / LMG 22486) (Burkholderia cepacia (strain R1808)) protein is Succinyl-diaminopimelate desuccinylase.